A 313-amino-acid polypeptide reads, in one-letter code: Ribosomal RNA small subunit methyltransferase H (313 aa).

Residues 35–37 (GGH), aspartate 55, phenylalanine 81, aspartate 103, and glutamine 110 each bind S-adenosyl-L-methionine.

This sequence belongs to the methyltransferase superfamily. RsmH family.

The protein resides in the cytoplasm. The enzyme catalyses cytidine(1402) in 16S rRNA + S-adenosyl-L-methionine = N(4)-methylcytidine(1402) in 16S rRNA + S-adenosyl-L-homocysteine + H(+). Its function is as follows. Specifically methylates the N4 position of cytidine in position 1402 (C1402) of 16S rRNA. The chain is Ribosomal RNA small subunit methyltransferase H from Pseudomonas aeruginosa (strain ATCC 15692 / DSM 22644 / CIP 104116 / JCM 14847 / LMG 12228 / 1C / PRS 101 / PAO1).